The following is a 120-amino-acid chain: Glycine cleavage system H protein (120 aa).

In terms of domain architecture, Lipoyl-binding spans 17–99 (VATVGITTYA…QGAGWFFKLK (83 aa)). Lys-58 bears the N6-lipoyllysine mark.

It belongs to the GcvH family. The glycine cleavage system is composed of four proteins: P, T, L and H. (R)-lipoate is required as a cofactor.

The glycine cleavage system catalyzes the degradation of glycine. The H protein shuttles the methylamine group of glycine from the P protein to the T protein. This chain is Glycine cleavage system H protein, found in Rhizobium etli (strain CIAT 652).